The sequence spans 399 residues: Lipoyl synthase, mitochondrial (399 aa).

Residues 1–14 (MALISRSCGAASRY) constitute a mitochondrion transit peptide. The segment covering 39 to 52 (AASTSSSSSPSPST) has biased composition (low complexity). A disordered region spans residues 39-60 (AASTSSSSSPSPSTHNDRKKDL). 7 residues coordinate [4Fe-4S] cluster: C128, C133, C139, C159, C163, C166, and S374. One can recognise a Radical SAM core domain in the interval 144–363 (EYATATATIM…EKVGQEMGFI (220 aa)).

It belongs to the radical SAM superfamily. Lipoyl synthase family. [4Fe-4S] cluster serves as cofactor.

Its subcellular location is the mitochondrion. The enzyme catalyses [[Fe-S] cluster scaffold protein carrying a second [4Fe-4S](2+) cluster] + N(6)-octanoyl-L-lysyl-[protein] + 2 oxidized [2Fe-2S]-[ferredoxin] + 2 S-adenosyl-L-methionine + 4 H(+) = [[Fe-S] cluster scaffold protein] + N(6)-[(R)-dihydrolipoyl]-L-lysyl-[protein] + 4 Fe(3+) + 2 hydrogen sulfide + 2 5'-deoxyadenosine + 2 L-methionine + 2 reduced [2Fe-2S]-[ferredoxin]. The protein operates within protein modification; protein lipoylation via endogenous pathway; protein N(6)-(lipoyl)lysine from octanoyl-[acyl-carrier-protein]: step 2/2. In terms of biological role, catalyzes the radical-mediated insertion of two sulfur atoms into the C-6 and C-8 positions of the octanoyl moiety bound to the lipoyl domains of lipoate-dependent enzymes, thereby converting the octanoylated domains into lipoylated derivatives. The chain is Lipoyl synthase, mitochondrial (lias) from Danio rerio (Zebrafish).